The chain runs to 419 residues: Tyrosine--tRNA ligase (419 aa).

L-tyrosine is bound at residue tyrosine 36. Residues proline 41 to histidine 50 carry the 'HIGH' region motif. L-tyrosine-binding residues include tyrosine 168 and glutamine 172. Residues lysine 230 to threonine 234 carry the 'KMSKS' region motif. Position 233 (lysine 233) interacts with ATP. The 68-residue stretch at lysine 352–lysine 419 folds into the S4 RNA-binding domain.

This sequence belongs to the class-I aminoacyl-tRNA synthetase family. TyrS type 1 subfamily. In terms of assembly, homodimer.

Its subcellular location is the cytoplasm. The enzyme catalyses tRNA(Tyr) + L-tyrosine + ATP = L-tyrosyl-tRNA(Tyr) + AMP + diphosphate + H(+). In terms of biological role, catalyzes the attachment of tyrosine to tRNA(Tyr) in a two-step reaction: tyrosine is first activated by ATP to form Tyr-AMP and then transferred to the acceptor end of tRNA(Tyr). The polypeptide is Tyrosine--tRNA ligase (Latilactobacillus sakei subsp. sakei (strain 23K) (Lactobacillus sakei subsp. sakei)).